We begin with the raw amino-acid sequence, 206 residues long: Proteasome subunit beta 2 (206 aa).

Positions 1–7 (MREAVSK) are cleaved as a propeptide — removed in mature form; by autocatalysis. The Nucleophile role is filled by Thr-8.

This sequence belongs to the peptidase T1B family. As to quaternary structure, the 20S proteasome core is composed of 14 alpha and 14 beta subunits that assemble into four stacked heptameric rings, resulting in a barrel-shaped structure. The two inner rings, each composed of seven catalytic beta subunits, are sandwiched by two outer rings, each composed of seven alpha subunits. The catalytic chamber with the active sites is on the inside of the barrel. Has a gated structure, the ends of the cylinder being occluded by the N-termini of the alpha-subunits. Is capped at one or both ends by the proteasome regulatory ATPase, PAN.

Its subcellular location is the cytoplasm. It catalyses the reaction Cleavage of peptide bonds with very broad specificity.. With respect to regulation, the formation of the proteasomal ATPase PAN-20S proteasome complex, via the docking of the C-termini of PAN into the intersubunit pockets in the alpha-rings, triggers opening of the gate for substrate entry. Interconversion between the open-gate and close-gate conformations leads to a dynamic regulation of the 20S proteasome proteolysis activity. Functionally, component of the proteasome core, a large protease complex with broad specificity involved in protein degradation. This is Proteasome subunit beta 2 from Desulfurococcus amylolyticus (strain DSM 18924 / JCM 16383 / VKM B-2413 / 1221n) (Desulfurococcus kamchatkensis).